The following is a 516-amino-acid chain: D-alanine--D-alanyl carrier protein ligase (516 aa).

156–157 (TS) provides a ligand contact to ATP. Aspartate 203 contributes to the D-alanine binding site. 298–303 (NAYGPT) contacts ATP. Valine 307 contributes to the D-alanine binding site. ATP contacts are provided by residues aspartate 389, 401–404 (YGGR), and lysine 503. Lysine 503 provides a ligand contact to D-alanine.

This sequence belongs to the ATP-dependent AMP-binding enzyme family. DltA subfamily.

It localises to the cytoplasm. The catalysed reaction is holo-[D-alanyl-carrier protein] + D-alanine + ATP = D-alanyl-[D-alanyl-carrier protein] + AMP + diphosphate. It functions in the pathway cell wall biogenesis; lipoteichoic acid biosynthesis. Functionally, catalyzes the first step in the D-alanylation of lipoteichoic acid (LTA), the activation of D-alanine and its transfer onto the D-alanyl carrier protein (Dcp) DltC. In an ATP-dependent two-step reaction, forms a high energy D-alanyl-AMP intermediate, followed by transfer of the D-alanyl residue as a thiol ester to the phosphopantheinyl prosthetic group of the Dcp. D-alanylation of LTA plays an important role in modulating the properties of the cell wall in Gram-positive bacteria, influencing the net charge of the cell wall. The protein is D-alanine--D-alanyl carrier protein ligase of Streptococcus pneumoniae (strain ATCC 700669 / Spain 23F-1).